The primary structure comprises 339 residues: Phenylalanine--tRNA ligase alpha subunit (339 aa).

Glu-254 serves as a coordination point for Mg(2+).

Belongs to the class-II aminoacyl-tRNA synthetase family. Phe-tRNA synthetase alpha subunit type 1 subfamily. As to quaternary structure, tetramer of two alpha and two beta subunits. The cofactor is Mg(2+).

The protein resides in the cytoplasm. The catalysed reaction is tRNA(Phe) + L-phenylalanine + ATP = L-phenylalanyl-tRNA(Phe) + AMP + diphosphate + H(+). The polypeptide is Phenylalanine--tRNA ligase alpha subunit (pheS) (Chlamydia pneumoniae (Chlamydophila pneumoniae)).